The sequence spans 360 residues: Mannose-1-phosphate guanylyltransferase catalytic subunit beta (360 aa).

The interval 2 to 222 (KALILVGGYG…QGFWMDIGQP (221 aa)) is substrate-binding domain. Residue Asp-110 coordinates GDP-alpha-D-mannose. Residue Asp-110 participates in Mg(2+) binding. Residue Lys-162 is part of the active site. Asp-218 lines the GDP-alpha-D-mannose pocket. Asp-218 serves as a coordination point for Mg(2+). A hexapeptide repeat domain region spans residues 245–360 (CSGPGIVGNV…ESVPEPGIIM (116 aa)).

The protein belongs to the transferase hexapeptide repeat family. As to quaternary structure, component of the GMPPA-GMPPB mannose-1-phosphate guanylyltransferase complex composed of 4 GMPPA subunits and 8 GMPPB subunits; the complex is organized into three layers, a central layer made up of 2 GMPPA dimers sandwiched between two layers each made up of 2 GMPPB dimers. GMPPB catalytic activity is reduced when part of the complex and binding of GDP-alpha-D-Mannose by GMPPA induces allosteric feedback inhibition of GMPPB. Mg(2+) is required as a cofactor. As to expression, expressed in the liver (at protein level).

Its subcellular location is the cytoplasm. It carries out the reaction alpha-D-mannose 1-phosphate + GTP + H(+) = GDP-alpha-D-mannose + diphosphate. The protein operates within nucleotide-sugar biosynthesis; GDP-alpha-D-mannose biosynthesis; GDP-alpha-D-mannose from alpha-D-mannose 1-phosphate (GTP route): step 1/1. Enzyme activity is reduced by incorporation into the GMPPA-GMPPB mannose-1-phosphate guanylyltransferase complex. Allosterically inhibited, when part of the GMPPA-GMPPB complex, by GDP-alpha-D-mannose binding to GMPPA. Functionally, catalytic subunit of the GMPPA-GMPPB mannose-1-phosphate guanylyltransferase complex. Catalyzes the formation of GDP-mannose, an essential precursor of glycan moieties of glycoproteins and glycolipids. Can catalyze the reverse reaction in vitro. Together with GMPPA regulates GDP-alpha-D-mannose levels. This chain is Mannose-1-phosphate guanylyltransferase catalytic subunit beta, found in Sus scrofa (Pig).